The following is a 344-amino-acid chain: Protein pelota homolog (344 aa).

The protein belongs to the eukaryotic release factor 1 family. Pelota subfamily. As to quaternary structure, monomer. Requires a divalent metal cation as cofactor.

It localises to the cytoplasm. In terms of biological role, may function in recognizing stalled ribosomes, interact with stem-loop structures in stalled mRNA molecules, and effect endonucleolytic cleavage of the mRNA. May play a role in the release non-functional ribosomes and degradation of damaged mRNAs. Has endoribonuclease activity. The protein is Protein pelota homolog of Saccharolobus islandicus (strain M.16.27) (Sulfolobus islandicus).